The chain runs to 449 residues: Hyaluronidase-1 (449 aa).

The first 23 residues, 1–23, serve as a signal peptide directing secretion; sequence MYHIWIKFLAAWIFLKRFNGVHV. Disulfide bonds link Cys-47-Cys-340 and Cys-211-Cys-227. Asn-67, Asn-103, and Asn-111 each carry an N-linked (GlcNAc...) asparagine glycan. Residue Glu-135 is the Proton donor of the active site. An N-linked (GlcNAc...) asparagine glycan is attached at Asn-153. Asn-357 is a glycosylation site (N-linked (GlcNAc...) asparagine). 3 disulfides stabilise this stretch: Cys-365–Cys-376, Cys-370–Cys-427, and Cys-429–Cys-438. N-linked (GlcNAc...) asparagine glycosylation occurs at Asn-401. Residues 427–438 form the EGF-like domain; that stretch reads CQCYQGWKGLYC.

This sequence belongs to the glycosyl hydrolase 56 family. As to quaternary structure, monomer. In terms of tissue distribution, expressed by the venom gland.

It is found in the secreted. It catalyses the reaction Random hydrolysis of (1-&gt;4)-linkages between N-acetyl-beta-D-glucosamine and D-glucuronate residues in hyaluronate.. Its function is as follows. Snake venom endo-hyaluronidase that degrades hyaluronan to smaller oligosaccharide fragments. In venom, it is not toxic by itself, but increases the diffusion of other venom proteins by degrading the extracellular matrix. In addition, it displays antiedematogenic activity. This chain is Hyaluronidase-1, found in Cerastes cerastes (Horned desert viper).